A 284-amino-acid polypeptide reads, in one-letter code: 2-dehydro-3-deoxyphosphooctonate aldolase (284 aa).

This sequence belongs to the KdsA family.

The protein localises to the cytoplasm. The enzyme catalyses D-arabinose 5-phosphate + phosphoenolpyruvate + H2O = 3-deoxy-alpha-D-manno-2-octulosonate-8-phosphate + phosphate. Its pathway is carbohydrate biosynthesis; 3-deoxy-D-manno-octulosonate biosynthesis; 3-deoxy-D-manno-octulosonate from D-ribulose 5-phosphate: step 2/3. It functions in the pathway bacterial outer membrane biogenesis; lipopolysaccharide biosynthesis. The polypeptide is 2-dehydro-3-deoxyphosphooctonate aldolase (Aliivibrio fischeri (strain ATCC 700601 / ES114) (Vibrio fischeri)).